The sequence spans 149 residues: UPF0260 protein PFLU_1520 (149 aa).

This sequence belongs to the UPF0260 family.

This is UPF0260 protein PFLU_1520 from Pseudomonas fluorescens (strain SBW25).